An 84-amino-acid polypeptide reads, in one-letter code: Subtilisin-chymotrypsin inhibitor WSCI (84 aa).

A signal peptide spans 1–12 (MSSVVKKPLGGN). The disordered stretch occupies residues 1–28 (MSSVVKKPLGGNTDTGDHHNQKTEWPEL). Residues 15–25 (TGDHHNQKTEW) show a composition bias toward basic and acidic residues.

In terms of assembly, monomer.

Its subcellular location is the secreted. Inhibits B.lichenoformis subtilisin, B.subtilis subtilisin, bovine pancreatic alpha-chymotrypsin and porcine alpha-chymotrypsin with Ki of 3.92 nM, 5.70 nM, 7.24 nM and 9.35 nM respectively. B.lichenoformis subtilisin is inhibited with a molar ratio of 1:0.87. Also inhibits chymotrypsin-like activities from the digestive tracts of the insect larvae T.molitor, P.interpunctella and H.armigera. Does not inhibit bovine pancreatic trypsin, porcine pancreatic elastase, or human leukocyte elastase. The polypeptide is Subtilisin-chymotrypsin inhibitor WSCI (Triticum aestivum (Wheat)).